Here is a 317-residue protein sequence, read N- to C-terminus: Melanocyte-stimulating hormone receptor (317 aa).

Residues 1–37 (MPVQGSQRRLLGSLNSTPTATPHLGLAANQTGARCLE) are Extracellular-facing. Asn29 carries an N-linked (GlcNAc...) asparagine glycan. Residues 38-63 (MSIPDGLFLSLGLVSLVENVLVVTAI) traverse the membrane as a helical segment. Residues 64–72 (AKNRNLHSP) lie on the Cytoplasmic side of the membrane. Residues 73–93 (MYCFICCLALSDLLVSGSNML) form a helical membrane-spanning segment. The Extracellular segment spans residues 94–118 (ETAVTLLLEAGALAARAAVVQQLDN). The helical transmembrane segment at 119 to 140 (VIDVITCSSMLSSLCFLGAIAV) threads the bilayer. Over 141-163 (DRYISIFYALRYHSIVTLPRARR) the chain is Cytoplasmic. The chain crosses the membrane as a helical span at residues 164–183 (AIAAIWVASVLCSTLFIAYY). Topologically, residues 184-191 (DHAAVLLC) are extracellular. The chain crosses the membrane as a helical span at residues 192-211 (LVVFFLAMLVLMAVLYVHML). The Cytoplasmic segment spans residues 212-240 (ARACQHAQGIARLHKRQRLAHQGFGLKGA). Residues 241–266 (ATLTILLGIFFLCWGPFFLHLTLIVL) form a helical membrane-spanning segment. At 267–279 (CPQHPTCSCIFKN) the chain is on the extracellular side. The helical transmembrane segment at 280-300 (FNLFLTLIICNAIIDPLIYAF) threads the bilayer. The Cytoplasmic segment spans residues 301–317 (RSQELRRTLKEVLLCSW). Residue Cys315 is the site of S-palmitoyl cysteine attachment.

Belongs to the G-protein coupled receptor 1 family. In terms of assembly, interacts with MGRN1, but does not undergo MGRN1-mediated ubiquitination; this interaction competes with GNAS-binding and thus inhibits agonist-induced cAMP production. Interacts with OPN3; the interaction results in a decrease in MC1R-mediated cAMP signaling and ultimately a decrease in melanin production in melanocytes.

Its subcellular location is the cell membrane. Functionally, receptor for MSH (alpha, beta and gamma) and ACTH. The activity of this receptor is mediated by G proteins which activate adenylate cyclase. Mediates melanogenesis, the production of eumelanin (black/brown) and phaeomelanin (red/yellow), via regulation of cAMP signaling in melanocytes. In Macaca nemestrina (Pig-tailed macaque), this protein is Melanocyte-stimulating hormone receptor (MC1R).